Here is a 223-residue protein sequence, read N- to C-terminus: Uridylate kinase (223 aa).

9–10 (GS) provides a ligand contact to ATP. Gly-42 contacts UMP. ATP contacts are provided by Gly-43 and Arg-47. Residues Asp-64 and 112–118 (VSPGQTT) contribute to the UMP site. Residues Thr-138, Tyr-144, and Asp-147 each coordinate ATP.

This sequence belongs to the UMP kinase family. As to quaternary structure, homohexamer.

Its subcellular location is the cytoplasm. It catalyses the reaction UMP + ATP = UDP + ADP. The protein operates within pyrimidine metabolism; CTP biosynthesis via de novo pathway; UDP from UMP (UMPK route): step 1/1. With respect to regulation, inhibited by UTP. In terms of biological role, catalyzes the reversible phosphorylation of UMP to UDP. The protein is Uridylate kinase of Methanothrix thermoacetophila (strain DSM 6194 / JCM 14653 / NBRC 101360 / PT) (Methanosaeta thermophila).